Here is a 500-residue protein sequence, read N- to C-terminus: 7-alpha-hydroxycholest-4-en-3-one 12-alpha-hydroxylase (500 aa).

A helical transmembrane segment spans residues 2-21 (VLWGLLGALLMVMVGWLCLP). Phosphoserine is present on S325. C439 serves as a coordination point for heme.

Belongs to the cytochrome P450 family. Heme serves as cofactor. In terms of tissue distribution, liver (at protein level).

It is found in the endoplasmic reticulum membrane. The protein localises to the microsome membrane. The catalysed reaction is 7alpha-hydroxycholest-4-en-3-one + reduced [NADPH--hemoprotein reductase] + O2 = 7alpha,12alpha-dihydroxycholest-4-en-3-one + oxidized [NADPH--hemoprotein reductase] + H2O + H(+). The enzyme catalyses 5beta-cholestane-3alpha,7alpha-diol + reduced [NADPH--hemoprotein reductase] + O2 = 5beta-cholestane-3alpha,7alpha,12alpha-triol + oxidized [NADPH--hemoprotein reductase] + H2O + H(+). It carries out the reaction chenodeoxycholate + reduced [NADPH--hemoprotein reductase] + O2 = cholate + oxidized [NADPH--hemoprotein reductase] + H2O + H(+). The protein operates within lipid metabolism; bile acid biosynthesis. Its activity is regulated as follows. Up-regulated upon treatment with streptozotocin. In terms of biological role, a cytochrome P450 monooxygenase involved in primary bile acid biosynthesis. Catalyzes the 12alpha-hydroxylation of 7alpha-hydroxy-4-cholesten-3-one, an intermediate metabolite in cholic acid biosynthesis. Controls biliary balance of cholic acid and chenodeoxycholic acid, ultimately regulating the intestinal absorption of dietary lipids. Mechanistically, uses molecular oxygen inserting one oxygen atom into a substrate, and reducing the second into a water molecule, with two electrons provided by NADPH via cytochrome P450 reductase (CPR; NADPH--hemoprotein reductase). This Oryctolagus cuniculus (Rabbit) protein is 7-alpha-hydroxycholest-4-en-3-one 12-alpha-hydroxylase (CYP8B1).